The following is a 96-amino-acid chain: Prokineticin Bm8-b (96 aa).

An N-terminal signal peptide occupies residues 1–19 (MKCFAQIVVLLLVIAFSHG). Intrachain disulfides connect Cys-32/Cys-50, Cys-37/Cys-78, Cys-60/Cys-86, and Cys-80/Cys-95.

It belongs to the AVIT (prokineticin) family. Expressed by the skin glands.

It is found in the secreted. Functionally, potent agonist for both PKR1/PROKR1 and PKR2/PROKR2, and inducer of a potent and long-lasting hyperalgesia. Also potentiates capsaicin-induced TRPV1 current, when tested on DRG neurons. At subnanomolar concentrations, this protein both induces potent chemotaxis of macrophages and stimulates LPS-induced production of the pro-inflammatory cytokines IL-1 and IL-12. In vivo, potently stimulates the contraction of the guinea-pig gastrointestinal (GI) smooth muscle (nanomolar concentration). The sequence is that of Prokineticin Bm8-b from Bombina maxima (Giant fire-bellied toad).